The sequence spans 379 residues: MGDWSALGRLLDKVQAYSTAGGKVWLSVLFIFRILLLGTAVESAWGDEQSAFVCNTQQPGCENVCYDKSFPISHVRFWVLQIIFVSTPTLLYLAHVFYLMRKEEKLNRKEEELKMVQNEGGNVDMHLKQIEIKKFKYGLEEHGKVKMRGGLLRTYIISILFKSVFEVGFIIIQWYMYGFSLSAIYTCKRDPCPHQVDCFLSRPTEKTIFIWFMLIVSIVSLALNIIELFYVTYKSIKDGIKGKKDPFSATNDAVISGKECGSPKYAYFNGCSSPTAPMSPPGYKLVTGERNPSSCRNYNKQASEQNWANYSAEQNRMGQAGSTISNTHAQPFDFSDEHQNTKKMAPGHEMQPLTILDQRPSSRASSHASSRPRPDDLEI.

Residues 2 to 23 lie on the Cytoplasmic side of the membrane; sequence GDWSALGRLLDKVQAYSTAGGK. The helical transmembrane segment at 24-44 threads the bilayer; it reads VWLSVLFIFRILLLGTAVESA. The Extracellular portion of the chain corresponds to 45 to 76; that stretch reads WGDEQSAFVCNTQQPGCENVCYDKSFPISHVR. Intrachain disulfides connect Cys-54–Cys-192 and Cys-187–Cys-198. The helical transmembrane segment at 77–97 threads the bilayer; that stretch reads FWVLQIIFVSTPTLLYLAHVF. The Cytoplasmic segment spans residues 98–163; that stretch reads YLMRKEEKLN…TYIISILFKS (66 aa). Residues 164-184 traverse the membrane as a helical segment; sequence VFEVGFIIIQWYMYGFSLSAI. The Extracellular segment spans residues 185–207; sequence YTCKRDPCPHQVDCFLSRPTEKT. Residues 208–228 traverse the membrane as a helical segment; that stretch reads IFIWFMLIVSIVSLALNIIEL. Over 229 to 379 the chain is Cytoplasmic; sequence FYVTYKSIKD…SRPRPDDLEI (151 aa). The segment at 322 to 379 is disordered; that stretch reads STISNTHAQPFDFSDEHQNTKKMAPGHEMQPLTILDQRPSSRASSHASSRPRPDDLEI. Residues 359–371 are compositionally biased toward low complexity; it reads RPSSRASSHASSR.

The protein belongs to the connexin family. Alpha-type (group II) subfamily. As to quaternary structure, a connexon is composed of a hexamer of connexins. Interacts with TMEM65. Expressed in most tissues. Highest levels found in eye and brain.

It localises to the cell membrane. The protein resides in the cell junction. The protein localises to the gap junction. Functionally, one gap junction consists of a cluster of closely packed pairs of transmembrane channels, the connexons, through which materials of low MW diffuse from one cell to a neighboring cell. Plays an essential role in gap junction communication in the ventricles. The sequence is that of Gap junction alpha-1 protein (gja1) from Xenopus laevis (African clawed frog).